Consider the following 194-residue polypeptide: PPE family protein PPE41 (194 aa).

Belongs to the mycobacterial PPE family. As to quaternary structure, forms a heterodimer with PE25. The dimer forms a 1:1:1 heterotrimeric complex with EspG5. PPE41 interacts directly with EspG5.

It localises to the secreted. The protein resides in the cell surface. In terms of biological role, the PE25/PPE41 dimer induces both a strong humoral and cellular immune response. The dimer induces necrosis, but not apoptosis, in mouse macrophage cells. It also induces activation and maturation of mouse dendritic cells and drives Th2-biased immune responses. The protein is PPE family protein PPE41 of Mycobacterium tuberculosis (strain ATCC 25618 / H37Rv).